A 250-amino-acid chain; its full sequence is Proteasome subunit alpha type-7-B (250 aa).

Lysine 62 is covalently cross-linked (Glycyl lysine isopeptide (Lys-Gly) (interchain with G-Cter in ubiquitin)).

This sequence belongs to the peptidase T1A family. Component of the 20S core complex of the 26S proteasome. The 26S proteasome is composed of a core protease (CP), known as the 20S proteasome, capped at one or both ends by the 19S regulatory particle (RP/PA700). The 20S proteasome core is composed of 28 subunits that are arranged in four stacked rings, resulting in a barrel-shaped structure. The two end rings are each formed by seven alpha subunits, and the two central rings are each formed by seven beta subunits. The catalytic chamber with the active sites is on the inside of the barrel.

It is found in the cytoplasm. It localises to the nucleus. Its function is as follows. The proteasome is a multicatalytic proteinase complex which is characterized by its ability to cleave peptides with Arg, Phe, Tyr, Leu, and Glu adjacent to the leaving group at neutral or slightly basic pH. The proteasome has an ATP-dependent proteolytic activity. In Arabidopsis thaliana (Mouse-ear cress), this protein is Proteasome subunit alpha type-7-B (PAD2).